The sequence spans 141 residues: Large ribosomal subunit protein uL16 (141 aa).

Positions 1–20 (MLMPKRTKYRKQMKGRNRGK) are disordered.

It belongs to the universal ribosomal protein uL16 family. Part of the 50S ribosomal subunit.

In terms of biological role, binds 23S rRNA and is also seen to make contacts with the A and possibly P site tRNAs. The protein is Large ribosomal subunit protein uL16 of Helicobacter hepaticus (strain ATCC 51449 / 3B1).